Here is an 86-residue protein sequence, read N- to C-terminus: Putative membrane protein insertion efficiency factor (86 aa).

A disordered region spans residues 66–86 (FSKGGFDPVPPHDGVPGKKED).

Belongs to the UPF0161 family.

It is found in the cell inner membrane. Its function is as follows. Could be involved in insertion of integral membrane proteins into the membrane. The polypeptide is Putative membrane protein insertion efficiency factor (Chlorobium luteolum (strain DSM 273 / BCRC 81028 / 2530) (Pelodictyon luteolum)).